Reading from the N-terminus, the 358-residue chain is Homoserine O-acetyltransferase (358 aa).

Positions 41–343 (NAVLICHALT…DYGHDAFLVD (303 aa)) constitute an AB hydrolase-1 domain. Ser-143 serves as the catalytic Nucleophile. Residue Arg-212 coordinates substrate. Residues Asp-304 and His-337 contribute to the active site. Substrate is bound at residue Asp-338.

This sequence belongs to the AB hydrolase superfamily. MetX family. In terms of assembly, homodimer.

It localises to the cytoplasm. The enzyme catalyses L-homoserine + acetyl-CoA = O-acetyl-L-homoserine + CoA. Its pathway is amino-acid biosynthesis; L-methionine biosynthesis via de novo pathway; O-acetyl-L-homoserine from L-homoserine: step 1/1. Functionally, transfers an acetyl group from acetyl-CoA to L-homoserine, forming acetyl-L-homoserine. The polypeptide is Homoserine O-acetyltransferase (Haemophilus influenzae (strain 86-028NP)).